The chain runs to 235 residues: Glycerol uptake facilitator protein 2 (235 aa).

A run of 6 helical transmembrane segments spans residues 4–24, 39–59, 62–82, 83–103, 134–154, and 165–185; these read FLGE…SGAA, FICL…GQFG, GHLN…PMAN, VWPY…IVII, VFNF…LLNL, and MVGL…GFAI. The NPA 1 motif lies at 65-67; it reads NPA. The NPA 2 motif lies at 186–188; it reads NPA. A helical membrane pass occupies residues 210–230; that stretch reads WGYAWVPMFGPLLGGILAAGL.

It belongs to the MIP/aquaporin (TC 1.A.8) family.

The protein resides in the cell membrane. Functionally, transporter that facilitates the transmembrane diffusion of water, dihydroxyacetone, glycerol and H(2)O(2). Is not permeable to urea and D/L-lactic acid. The sequence is that of Glycerol uptake facilitator protein 2 from Lactiplantibacillus plantarum (strain ATCC BAA-793 / NCIMB 8826 / WCFS1) (Lactobacillus plantarum).